Here is a 474-residue protein sequence, read N- to C-terminus: ATP synthase subunit beta (474 aa).

Position 151–158 (G151–T158) interacts with ATP.

Belongs to the ATPase alpha/beta chains family. F-type ATPases have 2 components, CF(1) - the catalytic core - and CF(0) - the membrane proton channel. CF(1) has five subunits: alpha(3), beta(3), gamma(1), delta(1), epsilon(1). CF(0) has four main subunits: a(1), b(1), b'(1) and c(9-12).

The protein resides in the cell inner membrane. It catalyses the reaction ATP + H2O + 4 H(+)(in) = ADP + phosphate + 5 H(+)(out). Its function is as follows. Produces ATP from ADP in the presence of a proton gradient across the membrane. The catalytic sites are hosted primarily by the beta subunits. The sequence is that of ATP synthase subunit beta from Jannaschia sp. (strain CCS1).